Reading from the N-terminus, the 638-residue chain is ATP-dependent zinc metalloprotease FtsH (638 aa).

Over 1–15 the chain is Cytoplasmic; that stretch reads MDNNHKGPNDPNSKK. The helical transmembrane segment at 16–36 threads the bilayer; sequence PLLQNPLLLIAIFGIIIFVAM. Over 37–122 the chain is Periplasmic; the sequence is RVMNSDEGFG…INYSGFSESN (86 aa). The chain crosses the membrane as a helical span at residues 123 to 143; sequence FFADILGWLLPVLVILGLWMF. Topologically, residues 144–638 are cytoplasmic; it reads MASRMQKNMG…RLVPLEEHAS (495 aa). 216-223 contributes to the ATP binding site; the sequence is GPPGTGKT. A Zn(2+)-binding site is contributed by histidine 440. Residue glutamate 441 is part of the active site. Zn(2+) contacts are provided by histidine 444 and aspartate 517.

This sequence in the central section; belongs to the AAA ATPase family. It in the C-terminal section; belongs to the peptidase M41 family. Homohexamer. The cofactor is Zn(2+).

Its subcellular location is the cell inner membrane. Functionally, acts as a processive, ATP-dependent zinc metallopeptidase for both cytoplasmic and membrane proteins. Plays a role in the quality control of integral membrane proteins. The polypeptide is ATP-dependent zinc metalloprotease FtsH (Helicobacter felis (strain ATCC 49179 / CCUG 28539 / NCTC 12436 / CS1)).